Reading from the N-terminus, the 89-residue chain is Small ribosomal subunit protein uS15 (89 aa).

It belongs to the universal ribosomal protein uS15 family. Part of the 30S ribosomal subunit. Forms a bridge to the 50S subunit in the 70S ribosome, contacting the 23S rRNA.

One of the primary rRNA binding proteins, it binds directly to 16S rRNA where it helps nucleate assembly of the platform of the 30S subunit by binding and bridging several RNA helices of the 16S rRNA. In terms of biological role, forms an intersubunit bridge (bridge B4) with the 23S rRNA of the 50S subunit in the ribosome. The sequence is that of Small ribosomal subunit protein uS15 from Streptococcus pyogenes serotype M2 (strain MGAS10270).